A 342-amino-acid polypeptide reads, in one-letter code: Nucleoid-associated protein Shewmr4_2217 (342 aa).

The protein belongs to the YejK family.

Its subcellular location is the cytoplasm. It is found in the nucleoid. The polypeptide is Nucleoid-associated protein Shewmr4_2217 (Shewanella sp. (strain MR-4)).